The sequence spans 354 residues: Replication factor C subunit 5 (354 aa).

Residue 40 to 47 coordinates ATP; that stretch reads YGPSGSGK.

It belongs to the activator 1 small subunits family. As to quaternary structure, heterotetramer of subunits RFC2, RFC3, RFC4 and RFC5 that can form a complex with RFC1. In terms of tissue distribution, expressed in roots, leaves, shoot apical meristem (SAM), flag leaves and panicles.

The protein resides in the nucleus. Functionally, may be involved in DNA replication and thus regulate cell proliferation. The sequence is that of Replication factor C subunit 5 (RFC5) from Oryza sativa subsp. japonica (Rice).